Here is a 467-residue protein sequence, read N- to C-terminus: Na(+)/H(+) exchange regulatory cofactor-like protein nrfl-1 (467 aa).

PDZ domains lie at 12-94 (RLCV…ISEE) and 143-225 (LAEL…ASED). The tract at residues 344-429 (MSSHTEVLPP…ASSTSGYDDD (86 aa)) is disordered. Residues 407–425 (PSPLSNGSSHGYAASSTSG) are compositionally biased toward polar residues.

In terms of assembly, interacts (via PDZ 2 domain) with aat-6 (via PDZ-binding motif); the interaction sequesters aat-6 to the apical cell membrane of intestinal cells. Post-translationally, phosphorylated. Expressed in the excretory canal and intestine. Expressed on the apical cell membrane of intestinal cells (at protein level).

The protein localises to the cell projection. Its subcellular location is the microvillus membrane. It localises to the apical cell membrane. In terms of biological role, scaffold protein that connects plasma membrane proteins with members of the ezrin/moesin/radixin family and thereby helps to link them to the actin cytoskeleton and to regulate their surface expression. Anchors the amino acid transporter protein aat-6 to the apical cell membrane of intestinal cells, particularly in older animals, in order to maintain amino acid homeostasis. May play a role in promoting fertility. The protein is Na(+)/H(+) exchange regulatory cofactor-like protein nrfl-1 of Caenorhabditis elegans.